We begin with the raw amino-acid sequence, 293 residues long: Ribosomal protein L11 methyltransferase (293 aa).

Positions 145, 166, 188, and 230 each coordinate S-adenosyl-L-methionine.

It belongs to the methyltransferase superfamily. PrmA family.

The protein resides in the cytoplasm. The enzyme catalyses L-lysyl-[protein] + 3 S-adenosyl-L-methionine = N(6),N(6),N(6)-trimethyl-L-lysyl-[protein] + 3 S-adenosyl-L-homocysteine + 3 H(+). Its function is as follows. Methylates ribosomal protein L11. The polypeptide is Ribosomal protein L11 methyltransferase (Shewanella sp. (strain ANA-3)).